The sequence spans 464 residues: NADH dehydrogenase [ubiquinone] flavoprotein 1, mitochondrial (464 aa).

The transit peptide at 1–20 (MLAARRLLGGSLPSRVSVRF) directs the protein to the mitochondrion. Lys81 is modified (N6-acetyllysine; alternate). Residue Lys81 is modified to N6-succinyllysine; alternate. 87–96 (GRGGAGFPTG) is a binding site for NADH. Residue Lys104 is modified to N6-acetyllysine. 199-247 (RGAGAYICGEETALIESIEGKQGKPRLKPPFPADVGVFGCPTTVANVET) contributes to the FMN binding site. The residue at position 257 (Arg257) is an Omega-N-methylarginine. Position 375 is an N6-acetyllysine (Lys375). 4 residues coordinate [4Fe-4S] cluster: Cys379, Cys382, Cys385, and Cys425.

The protein belongs to the complex I 51 kDa subunit family. In terms of assembly, core subunit of respiratory chain NADH dehydrogenase (Complex I) which is composed of 45 different subunits. This is a component of the flavoprotein-sulfur (FP) fragment of the enzyme. Interacts with RAB5IF. FMN is required as a cofactor. The cofactor is [4Fe-4S] cluster.

It is found in the mitochondrion inner membrane. It carries out the reaction a ubiquinone + NADH + 5 H(+)(in) = a ubiquinol + NAD(+) + 4 H(+)(out). Functionally, core subunit of the mitochondrial membrane respiratory chain NADH dehydrogenase (Complex I) which catalyzes electron transfer from NADH through the respiratory chain, using ubiquinone as an electron acceptor. Part of the peripheral arm of the enzyme, where the electrons from NADH are accepted by flavin mononucleotide (FMN) and then passed along a chain of iron-sulfur clusters by electron tunnelling to the final acceptor ubiquinone. Contains FMN, which is the initial electron acceptor as well as one iron-sulfur cluster. This Macaca fascicularis (Crab-eating macaque) protein is NADH dehydrogenase [ubiquinone] flavoprotein 1, mitochondrial.